Here is a 143-residue protein sequence, read N- to C-terminus: Peptide methionine sulfoxide reductase MsrB (143 aa).

Residues 16-139 (DAELRRRLTP…NSAALNFESR (124 aa)) enclose the MsrB domain. Zn(2+) is bound by residues cysteine 55, cysteine 58, cysteine 104, and cysteine 107. Cysteine 128 (nucleophile) is an active-site residue.

This sequence belongs to the MsrB Met sulfoxide reductase family. Requires Zn(2+) as cofactor.

The catalysed reaction is L-methionyl-[protein] + [thioredoxin]-disulfide + H2O = L-methionyl-(R)-S-oxide-[protein] + [thioredoxin]-dithiol. The protein is Peptide methionine sulfoxide reductase MsrB of Burkholderia ambifaria (strain ATCC BAA-244 / DSM 16087 / CCUG 44356 / LMG 19182 / AMMD) (Burkholderia cepacia (strain AMMD)).